Here is a 167-residue protein sequence, read N- to C-terminus: Golgin subfamily A member 7B (167 aa).

2 S-palmitoyl cysteine lipidation sites follow: Cys78 and Cys81. A disordered region spans residues 140–167; that stretch reads RCSSGSSSSGSSSGSGSSSAGGGGAGAR. A compositionally biased stretch (low complexity) spans 142–157; it reads SSGSSSSGSSSGSGSS. The span at 158 to 167 shows a compositional bias: gly residues; sequence SAGGGGAGAR.

Belongs to the ERF4 family. In terms of processing, palmitoylated by ZDHHC5. Palmitoylation is required for the maintenance of ZDHHC5 at the plasma membrane.

The protein resides in the cell membrane. Its subcellular location is the golgi apparatus membrane. Its function is as follows. Play a role in cell adhesion by regulating the plasma membrane localization of the palmitoyltransferase ZDHHC5. May be involved in protein transport from Golgi to cell surface. The sequence is that of Golgin subfamily A member 7B (GOLGA7B) from Mus musculus (Mouse).